Reading from the N-terminus, the 122-residue chain is uncharacterized protein (122 aa).

The N-terminal stretch at Met-1–Ala-22 is a signal peptide.

This is an uncharacterized protein from Escherichia coli (strain K12).